The chain runs to 447 residues: Vasoactive intestinal polypeptide receptor (447 aa).

Over Met1–Val103 the chain is Extracellular. 3 disulfide bridges follow: Cys15/Cys36, Cys27/Cys69, and Cys50/Cys86. N-linked (GlcNAc...) asparagine glycans are attached at residues Asn17, Asn22, Asn64, and Asn91. Residues Lys104 to Ser128 traverse the membrane as a helical segment. The Cytoplasmic portion of the chain corresponds to Arg129–Arg135. The chain crosses the membrane as a helical span at residues Asn136–Val155. Residues Lys156–Lys178 lie on the Extracellular side of the membrane. N-linked (GlcNAc...) asparagine glycosylation occurs at Asn169. Cys177 and Cys247 are disulfide-bonded. A helical transmembrane segment spans residues Ala179 to Leu202. The Cytoplasmic portion of the chain corresponds to His203–Tyr216. A helical transmembrane segment spans residues Phe217 to Ala238. Over Lys239 to Leu256 the chain is Extracellular. Residues Phe257–Ile280 form a helical membrane-spanning segment. Over Arg281–Lys305 the chain is Cytoplasmic. A helical transmembrane segment spans residues Ser306–Pro325. At Glu326–Asp337 the chain is on the extracellular side. A helical membrane pass occupies residues Leu338 to Gly357. The Cytoplasmic segment spans residues Glu358 to Ser447.

The protein belongs to the G-protein coupled receptor 2 family.

It localises to the cell membrane. In terms of biological role, this is a receptor for VIP. The activity of this receptor is mediated by G proteins which activate adenylyl cyclase. The polypeptide is Vasoactive intestinal polypeptide receptor (vipr1) (Carassius auratus (Goldfish)).